The primary structure comprises 229 residues: MAKQPKRITAWTGDRDAAHSVEAAIALVKANAKAKFDETIEISVNLGVDPRHADQQVRGVVNLPSGTGRDVRVAVFAKDAKAAEATAAGAEHVGADDLYEKIAGGFMDFDRVIATPDMMALVGRLGKVLGPRGLMPNPKVGTVTPNVAQAVKDAKGGAVEFRVEKAGIVHAGIGKASFTDEALAINVKALIEALNRSKPSGAKGVFIKRVGLSSTMGPGFKVDISSIGA.

This sequence belongs to the universal ribosomal protein uL1 family. Part of the 50S ribosomal subunit.

In terms of biological role, binds directly to 23S rRNA. The L1 stalk is quite mobile in the ribosome, and is involved in E site tRNA release. Protein L1 is also a translational repressor protein, it controls the translation of the L11 operon by binding to its mRNA. The sequence is that of Large ribosomal subunit protein uL1 from Caulobacter vibrioides (strain ATCC 19089 / CIP 103742 / CB 15) (Caulobacter crescentus).